A 292-amino-acid chain; its full sequence is Release factor glutamine methyltransferase (292 aa).

Residues 126-130 (GTGTG), Asp157, Trp184, and Asn198 contribute to the S-adenosyl-L-methionine site. Position 198–201 (198–201 (NPPY)) interacts with substrate.

The protein belongs to the protein N5-glutamine methyltransferase family. PrmC subfamily.

It carries out the reaction L-glutaminyl-[peptide chain release factor] + S-adenosyl-L-methionine = N(5)-methyl-L-glutaminyl-[peptide chain release factor] + S-adenosyl-L-homocysteine + H(+). In terms of biological role, methylates the class 1 translation termination release factors RF1/PrfA and RF2/PrfB on the glutamine residue of the universally conserved GGQ motif. This chain is Release factor glutamine methyltransferase, found in Haemophilus influenzae (strain ATCC 51907 / DSM 11121 / KW20 / Rd).